A 329-amino-acid polypeptide reads, in one-letter code: 4-hydroxythreonine-4-phosphate dehydrogenase (329 aa).

Substrate is bound by residues His-136 and Thr-137. A divalent metal cation-binding residues include His-166, His-211, and His-266. Substrate contacts are provided by Lys-274, Asn-283, and Arg-292.

This sequence belongs to the PdxA family. Homodimer. Zn(2+) serves as cofactor. It depends on Mg(2+) as a cofactor. Co(2+) is required as a cofactor.

It is found in the cytoplasm. It carries out the reaction 4-(phosphooxy)-L-threonine + NAD(+) = 3-amino-2-oxopropyl phosphate + CO2 + NADH. It functions in the pathway cofactor biosynthesis; pyridoxine 5'-phosphate biosynthesis; pyridoxine 5'-phosphate from D-erythrose 4-phosphate: step 4/5. Its function is as follows. Catalyzes the NAD(P)-dependent oxidation of 4-(phosphooxy)-L-threonine (HTP) into 2-amino-3-oxo-4-(phosphooxy)butyric acid which spontaneously decarboxylates to form 3-amino-2-oxopropyl phosphate (AHAP). This chain is 4-hydroxythreonine-4-phosphate dehydrogenase, found in Shigella sonnei (strain Ss046).